Here is a 348-residue protein sequence, read N- to C-terminus: Quinolinate synthase (348 aa).

Residues H47 and S68 each contribute to the iminosuccinate site. C113 provides a ligand contact to [4Fe-4S] cluster. Residues 139–141 and S156 each bind iminosuccinate; that span reads YAN. C200 serves as a coordination point for [4Fe-4S] cluster. Residues 226–228 and T243 each bind iminosuccinate; that span reads HPE. A [4Fe-4S] cluster-binding site is contributed by C297.

The protein belongs to the quinolinate synthase family. Type 1 subfamily. [4Fe-4S] cluster serves as cofactor.

It is found in the cytoplasm. It catalyses the reaction iminosuccinate + dihydroxyacetone phosphate = quinolinate + phosphate + 2 H2O + H(+). Its pathway is cofactor biosynthesis; NAD(+) biosynthesis; quinolinate from iminoaspartate: step 1/1. Functionally, catalyzes the condensation of iminoaspartate with dihydroxyacetone phosphate to form quinolinate. The sequence is that of Quinolinate synthase from Sodalis glossinidius (strain morsitans).